Reading from the N-terminus, the 62-residue chain is Sperm protamine P1 (62 aa).

Residues 1 to 62 (MARSRRHSRS…RCSRRRRRRC (62 aa)) are disordered.

This sequence belongs to the protamine P1 family. As to expression, testis.

The protein localises to the nucleus. It is found in the chromosome. Functionally, protamines substitute for histones in the chromatin of sperm during the haploid phase of spermatogenesis. They compact sperm DNA into a highly condensed, stable and inactive complex. The protein is Sperm protamine P1 (PRM1) of Planigale ingrami (Long-tailed planigale).